The following is a 351-amino-acid chain: Leukotriene B4 receptor 1 (351 aa).

The Extracellular portion of the chain corresponds to Met1–Leu21. N-linked (GlcNAc...) asparagine glycosylation is present at Asn4. The helical transmembrane segment at Leu22–Ser44 threads the bilayer. Topologically, residues Ile45–Ala56 are cytoplasmic. The chain crosses the membrane as a helical span at residues Leu57–Leu77. Topologically, residues His78–Arg93 are extracellular. Residues Leu94–Leu115 form a helical membrane-spanning segment. Over Asp116–Leu140 the chain is Cytoplasmic. Residues Ala141 to Thr161 form a helical membrane-spanning segment. The Extracellular portion of the chain corresponds to Pro162–Lys179. N-linked (GlcNAc...) asparagine glycosylation occurs at Asn164. The chain crosses the membrane as a helical span at residues Val180 to Ala200. Topologically, residues Ser201 to Arg222 are cytoplasmic. A helical membrane pass occupies residues Leu223–Leu243. Over Val244–Tyr268 the chain is Extracellular. Residues Val269–Gly289 form a helical membrane-spanning segment. Over Gly290–Lys351 the chain is Cytoplasmic. Polar residues-rich tracts occupy residues Glu311–Ala327 and Ser339–Lys351. Residues Glu311–Lys351 are disordered.

The protein belongs to the G-protein coupled receptor 1 family. Phosphorylated by GRK6 upon leukotriene B4 binding; which promotes desensitization. In terms of tissue distribution, exclusively expressed in polymorphonuclear leukocytes.

It is found in the cell membrane. Functionally, receptor for leukotriene B4, a potent chemoattractant involved in inflammation and immune response. This chain is Leukotriene B4 receptor 1 (Ltb4r), found in Rattus norvegicus (Rat).